The chain runs to 241 residues: Keratin-associated protein 5-5 (241 aa).

A run of 15 repeats spans residues 35-38 (CCKP), 41-44 (CCKP), 47-50 (CCVP), 105-108 (CCKP), 115-118 (CCKP), 133-136 (CCKP), 143-146 (CCKP), 161-164 (CCKP), 171-174 (CCKP), 181-184 (CCKP), 191-194 (CCKP), 201-204 (CCKP), 211-214 (CCKP), 221-224 (CCKP), and 231-234 (CCAP). The segment at 35–234 (CCKPVCCCKP…CCCQSSCCAP (200 aa)) is 15 X 4 AA repeats of C-C-X-P.

Belongs to the KRTAP type 5 family. As to quaternary structure, interacts with hair keratins.

Its function is as follows. In the hair cortex, hair keratin intermediate filaments are embedded in an interfilamentous matrix, consisting of hair keratin-associated protein (KRTAP), which are essential for the formation of a rigid and resistant hair shaft through their extensive disulfide bond cross-linking with abundant cysteine residues of hair keratins. The matrix proteins include the high-sulfur and high-glycine-tyrosine keratins. This chain is Keratin-associated protein 5-5, found in Mus musculus (Mouse).